We begin with the raw amino-acid sequence, 468 residues long: MKVDFDDLNNIFFVGIKGSGACSLACFLNSKGYCVEGVDVSDKFYTDEILSNNKISYYDNIYEFSLKQLDRSFDLIVYSSAYNKDGLQVLLEAKELNIPILSYPEALGELSRKYYSIGIAGSHGKTTTTAFLGVLFNKLGLNPNVIVGSSVKDFKDNSAIAGISNIFIVETCEYKKHFLNFSPNMLILTNVDYEHVDFFKNYEALEEAFLQYINNLKKNGILIINSDDNNLLKIKRQINRKDISIFSYGSGDLSDFQISNIAVRSEYFCFSFLGLLNVELKTVLFHNVLNFSAALLALNLFLESNGKSIFDFEEAIKRIAKNYSGIKRRVEVVKEENGVIYMDDYAHHPREIKNTLFGIKNFYKNKRIILDFMPHTFTRTKEFFADFVEVLSAADILILHNIYLSNRENFNPDELSVKLFLNIKKINKNTYFFKDVKDSINFIKSLLISGDLFITMGAGNNFILHDFL.

121-127 lines the ATP pocket; it reads GSHGKTT.

It belongs to the MurCDEF family.

It is found in the cytoplasm. It carries out the reaction UDP-N-acetyl-alpha-D-muramate + L-alanine + ATP = UDP-N-acetyl-alpha-D-muramoyl-L-alanine + ADP + phosphate + H(+). The protein operates within cell wall biogenesis; peptidoglycan biosynthesis. Cell wall formation. The sequence is that of UDP-N-acetylmuramate--L-alanine ligase from Borreliella burgdorferi (strain ATCC 35210 / DSM 4680 / CIP 102532 / B31) (Borrelia burgdorferi).